Here is a 330-residue protein sequence, read N- to C-terminus: tRNA N6-adenosine threonylcarbamoyltransferase (330 aa).

Residues histidine 110 and histidine 114 each coordinate Fe cation. Substrate-binding positions include leucine 133–glycine 137, aspartate 166, glycine 179, and asparagine 268. Aspartate 296 contributes to the Fe cation binding site.

Belongs to the KAE1 / TsaD family. The cofactor is Fe(2+).

The protein localises to the cytoplasm. The catalysed reaction is L-threonylcarbamoyladenylate + adenosine(37) in tRNA = N(6)-L-threonylcarbamoyladenosine(37) in tRNA + AMP + H(+). In terms of biological role, required for the formation of a threonylcarbamoyl group on adenosine at position 37 (t(6)A37) in tRNAs that read codons beginning with adenine. Is involved in the transfer of the threonylcarbamoyl moiety of threonylcarbamoyl-AMP (TC-AMP) to the N6 group of A37, together with TsaE and TsaB. TsaD likely plays a direct catalytic role in this reaction. This is tRNA N6-adenosine threonylcarbamoyltransferase from Kosmotoga olearia (strain ATCC BAA-1733 / DSM 21960 / TBF 19.5.1).